Reading from the N-terminus, the 480-residue chain is MNPTLTLTDFISIGPLLIVLMTALIIILIESFSENCSKKWSSLISIGGLTLSIFAVWGGISSNHSSLLNPWIHFDTLARFFTVFFLVIGIGASLLATAFFQRFKASHGEYFFLLQSAVFGLILIGAAADLLTLFLGIETLSISLYVLCGYMKKWEISHESSFKYFLMGSIVAGFLLYGIALVYGAIGTTRLDVLLSSYQTISLTTEKVLFFSGIAMITLGLAFKAALVPFHTWSPDVYAGASNPVTAFMAVGTKVGVFAAFVRLFFEALPQFDAAWNQVIDTLVYATLIYANFVALKQIQLRRFFAYSSISHAGFLMIPVVIGNQEALSALTFYLVIYAIATFGCFAVLAYLDQNQEGVHFSDLHGLFSRSPWLASLLSICLLTLAGIPPTAGFLAKFYVFKVAFQAGYYGLVIVGLLTTILSSYYYLRIIGILFSESKNDEKLPYSMPAAIVGTTSFIAIIILSFYPAPFLKVLSHLSN.

13 helical membrane passes run 10 to 30, 40 to 60, 80 to 100, 117 to 137, 166 to 186, 208 to 228, 246 to 266, 276 to 296, 304 to 324, 330 to 350, 374 to 394, 409 to 431, and 452 to 472; these read FISIGPLLIVLMTALIIILIE, WSSLISIGGLTLSIFAVWGGI, FFTVFFLVIGIGASLLATAFF, AVFGLILIGAAADLLTLFLGI, LMGSIVAGFLLYGIALVYGAI, VLFFSGIAMITLGLAFKAALV, TAFMAVGTKVGVFAAFVRLFF, WNQVIDTLVYATLIYANFVAL, FFAYSSISHAGFLMIPVVIGN, ALTFYLVIYAIATFGCFAVLA, LASLLSICLLTLAGIPPTAGF, YYGLVIVGLLTTILSSYYYLRII, and IVGTTSFIAIIILSFYPAPFL.

It belongs to the complex I subunit 2 family. NDH-1 is composed of 14 different subunits. Subunits NuoA, H, J, K, L, M, N constitute the membrane sector of the complex.

It is found in the cell inner membrane. It catalyses the reaction a quinone + NADH + 5 H(+)(in) = a quinol + NAD(+) + 4 H(+)(out). In terms of biological role, NDH-1 shuttles electrons from NADH, via FMN and iron-sulfur (Fe-S) centers, to quinones in the respiratory chain. The immediate electron acceptor for the enzyme in this species is believed to be ubiquinone. Couples the redox reaction to proton translocation (for every two electrons transferred, four hydrogen ions are translocated across the cytoplasmic membrane), and thus conserves the redox energy in a proton gradient. The polypeptide is NADH-quinone oxidoreductase subunit N (Protochlamydia amoebophila (strain UWE25)).